Reading from the N-terminus, the 299-residue chain is tRNA dimethylallyltransferase (299 aa).

10 to 17 is a binding site for ATP; that stretch reads GPTAVGKT. 12–17 lines the substrate pocket; the sequence is TAVGKT. An interaction with substrate tRNA region spans residues 35-38; it reads DSQQ.

Belongs to the IPP transferase family. As to quaternary structure, monomer. Requires Mg(2+) as cofactor.

The catalysed reaction is adenosine(37) in tRNA + dimethylallyl diphosphate = N(6)-dimethylallyladenosine(37) in tRNA + diphosphate. Catalyzes the transfer of a dimethylallyl group onto the adenine at position 37 in tRNAs that read codons beginning with uridine, leading to the formation of N6-(dimethylallyl)adenosine (i(6)A). This is tRNA dimethylallyltransferase from Streptococcus thermophilus (strain ATCC BAA-250 / LMG 18311).